The chain runs to 533 residues: Flavin-containing monooxygenase 5 (533 aa).

Dimethylated arginine is present on Arg-5. FAD-binding positions include 10 to 14 (GAGAS), Glu-33, and 41 to 42 (LW). Position 54 is a phosphoserine (Ser-54). Position 56 is a phosphotyrosine (Tyr-56). At Ser-58 the chain carries Phosphoserine. Residue 62 to 63 (NT) participates in FAD binding. 196–199 (SGGD) provides a ligand contact to NADP(+). Phosphoserine is present on Ser-280. Thr-284 carries the post-translational modification Phosphothreonine. Ser-401 is modified (phosphoserine). Residues 513 to 533 (LVTVRVLMLAVAFFAVILAYF) form a helical membrane-spanning segment.

It belongs to the FMO family. The cofactor is FAD. In terms of tissue distribution, expressed in liver (at protein level). Expressed in the mucosal epithelium of the gastrointestinal tract.

Its subcellular location is the microsome membrane. The protein resides in the endoplasmic reticulum membrane. It catalyses the reaction N,N-dimethylaniline + NADPH + O2 + H(+) = N,N-dimethylaniline N-oxide + NADP(+) + H2O. It carries out the reaction NADPH + O2 + H(+) = H2O2 + NADP(+). The catalysed reaction is heptan-2-one + NADPH + O2 + H(+) = pentyl acetate + NADP(+) + H2O. The enzyme catalyses octan-3-one + NADPH + O2 + H(+) = pentyl propanoate + NADP(+) + H2O. It catalyses the reaction octan-3-one + NADPH + O2 + H(+) = ethyl hexanoate + NADP(+) + H2O. It carries out the reaction hexan-3-one + NADPH + O2 + H(+) = ethyl butanoate + NADP(+) + H2O. The catalysed reaction is hexan-3-one + NADPH + O2 + H(+) = propyl propanoate + NADP(+) + H2O. The enzyme catalyses heptan-4-one + NADPH + O2 + H(+) = propyl butanoate + NADP(+) + H2O. It catalyses the reaction (2E)-geranial + NADPH + O2 + H(+) = (1E)-2,6-dimethylhepta-1,5-dien-1-yl formate + NADP(+) + H2O. It carries out the reaction sulcatone + NADPH + O2 + H(+) = 4-methylpent-3-en-1-yl acetate + NADP(+) + H2O. In terms of biological role, acts as a Baeyer-Villiger monooxygenase on a broad range of substrates. Catalyzes the insertion of an oxygen atom into a carbon-carbon bond adjacent to a carbonyl, which converts ketones to esters. Active on diverse carbonyl compounds, whereas soft nucleophiles are mostly non- or poorly reactive. In contrast with other forms of FMO it is non- or poorly active on 'classical' substrates such as drugs, pesticides, and dietary components containing soft nucleophilic heteroatoms. Able to oxidize drug molecules bearing a carbonyl group on an aliphatic chain, such as nabumetone and pentoxifylline. Also, in the absence of substrates, shows slow but yet significant NADPH oxidase activity. Acts as a positive modulator of cholesterol biosynthesis as well as glucose homeostasis, promoting metabolic aging via pleiotropic effects. The sequence is that of Flavin-containing monooxygenase 5 from Mus musculus (Mouse).